A 78-amino-acid polypeptide reads, in one-letter code: Conotoxin TsMSGL-11 (78 aa).

The first 24 residues, 1–24, serve as a signal peptide directing secretion; sequence MSGLGIMVLTLLLLVFMATSHQDA. Positions 25-44 are excised as a propeptide; the sequence is GEKQATQRDAINVRRRRSIT. Disulfide bonds link C51–C63, C55–C72, and C62–C76. The residue at position 77 (F77) is a Phenylalanine amide.

This sequence belongs to the conotoxin O3 superfamily. In terms of tissue distribution, expressed by the venom duct.

It is found in the secreted. This chain is Conotoxin TsMSGL-11, found in Conus tessulatus (Tessellate cone).